The primary structure comprises 524 residues: 56 kDa type-specific antigen (524 aa).

The signal sequence occupies residues 1-22; sequence MKKIMLIASAMSALSLPFSASA. A helical membrane pass occupies residues 67–87; sequence LTTGLPFGGTLAAGMTIAPGF. 2 disordered regions span residues 112–132 and 387–422; these read SKGEIKADSGGGTDTPIRKRF and EKLAAQQEEDAKNQGEGDCKQQQGASEKSKEGKGKE. Composition is skewed to basic and acidic residues over residues 395–405 and 413–422; these read EDAKNQGEGDC and EKSKEGKGKE. The chain crosses the membrane as a helical span at residues 472 to 492; sequence TGMVASGALGVAINAAEGVYV.

It is found in the cell membrane. In terms of biological role, may be an adherent factor for rickettsial adsorption to the host-cell surface and a determinant of virulence of individual rickettsial strain. It is the major outer membrane protein. The chain is 56 kDa type-specific antigen from Orientia tsutsugamushi (Rickettsia tsutsugamushi).